The following is a 542-amino-acid chain: CTP synthase (542 aa).

Residues 1–265 (MARYVFITGG…DDEVLAAFGI (265 aa)) are amidoligase domain. Ser13 serves as a coordination point for CTP. Ser13 is a binding site for UTP. ATP contacts are provided by residues 14–19 (SLGKGI) and Asp71. Mg(2+) is bound by residues Asp71 and Glu139. CTP-binding positions include 146 to 148 (DIE), 186 to 191 (KTKPTQ), and Lys222. UTP-binding positions include 186–191 (KTKPTQ) and Lys222. Positions 291-541 (TIAIVGKYTG…IEAATEQSRL (251 aa)) constitute a Glutamine amidotransferase type-1 domain. Position 353 (Gly353) interacts with L-glutamine. Catalysis depends on Cys380, which acts as the Nucleophile; for glutamine hydrolysis. L-glutamine contacts are provided by residues 381 to 384 (FGMQ), Glu404, and Arg469. Catalysis depends on residues His514 and Glu516.

This sequence belongs to the CTP synthase family. As to quaternary structure, homotetramer.

It carries out the reaction UTP + L-glutamine + ATP + H2O = CTP + L-glutamate + ADP + phosphate + 2 H(+). The enzyme catalyses L-glutamine + H2O = L-glutamate + NH4(+). It catalyses the reaction UTP + NH4(+) + ATP = CTP + ADP + phosphate + 2 H(+). Its pathway is pyrimidine metabolism; CTP biosynthesis via de novo pathway; CTP from UDP: step 2/2. Allosterically activated by GTP, when glutamine is the substrate; GTP has no effect on the reaction when ammonia is the substrate. The allosteric effector GTP functions by stabilizing the protein conformation that binds the tetrahedral intermediate(s) formed during glutamine hydrolysis. Inhibited by the product CTP, via allosteric rather than competitive inhibition. Its function is as follows. Catalyzes the ATP-dependent amination of UTP to CTP with either L-glutamine or ammonia as the source of nitrogen. Regulates intracellular CTP levels through interactions with the four ribonucleotide triphosphates. This Rhizobium leguminosarum bv. trifolii (strain WSM2304) protein is CTP synthase.